Consider the following 294-residue polypeptide: Nucleotide-binding protein CA_C0511 (294 aa).

Residue 8-15 (GLSGAGKT) participates in ATP binding. 59-62 (DIRG) lines the GTP pocket.

Belongs to the RapZ-like family.

Functionally, displays ATPase and GTPase activities. The chain is Nucleotide-binding protein CA_C0511 from Clostridium acetobutylicum (strain ATCC 824 / DSM 792 / JCM 1419 / IAM 19013 / LMG 5710 / NBRC 13948 / NRRL B-527 / VKM B-1787 / 2291 / W).